Here is a 636-residue protein sequence, read N- to C-terminus: Tumor protein p73 (636 aa).

The segment at 1-46 (MAQSTATSPDGGTTFEHLWSSLEPDSTYFDLPQSSRGNNEVVGGTD) is transactivation. The residue at position 27 (T27) is a Phosphothreonine; by PLK1. Position 28 is a phosphotyrosine; by SRC and HCK (Y28). Residues 78–104 (RAASASPYTPEHAASVPTHSPYAQPSS) are disordered. Residues 94–104 (PTHSPYAQPSS) show a composition bias toward polar residues. Y99 carries the post-translational modification Phosphotyrosine; by ABL1. The tract at residues 131 to 310 (FQQSSTAKSA…DRKADEDHYR (180 aa)) is DNA-binding. Residues C194, H197, C258, and C262 each coordinate Zn(2+). The tract at residues 314 to 345 (ALNESSAKNGAASKRAFKQSPPAVPALGAGVK) is disordered. The interval 345–380 (KKRRHGDEDTYYLQVRGRENFEILMKLKESLELMEL) is interaction with HIPK2. The interval 345-386 (KKRRHGDEDTYYLQVRGRENFEILMKLKESLELMELVPQPLV) is oligomerization. A PPxY motif motif is present at residues 483-487 (PPPPY). The SAM domain maps to 485–551 (PPYHADPSLV…WRGLQDLKQG (67 aa)). K627 is covalently cross-linked (Glycyl lysine isopeptide (Lys-Gly) (interchain with G-Cter in SUMO); in isoform Alpha). Residue K627 forms a Glycyl lysine isopeptide (Lys-Gly) (interchain with G-Cter in SUMO2) linkage.

Belongs to the p53 family. Found in a complex with p53/TP53 and CABLES1. The C-terminal oligomerization domain binds to the ABL1 tyrosine kinase SH3 domain. Interacts with HECW2. Isoform Beta interacts homotypically and with p53/TP53, whereas isoform Alpha does not. Isoform Gamma interacts homotypically and with all p73 isoforms. Isoform Delta interacts with isoform Gamma, isoform Alpha, and homotypically. Isoforms Alpha and Beta interact with HIPK2. Isoform Alpha interacts with RANBP9. Isoform Beta interacts with WWOX. Interacts (via SAM domain) with FBXO45 (via B30.2/SPRY domain). Interacts with YAP1 (phosphorylated form). Interacts with HCK (via SH3 domain); this inhibits TP73 activity and degradation. Interacts (via SAM domain) with NQO1; this interaction is NADH-dependent, stabilizes TP73 in response to oxidative stress and protects it from ubiquitin-independent degradation by the 20S proteasome. As to quaternary structure, (Microbial infection) Interacts with Epstein-Barr virus protein EBNA6; this interaction inhibits TP73-mediated apoptotic pathway. The cofactor is Zn(2+). In terms of processing, isoform alpha (but not isoform beta) is sumoylated on Lys-627, which potentiates proteasomal degradation but does not affect transcriptional activity. Phosphorylation by PLK1 and PLK3 inhibits the transcription regulator activity and pro-apoptotic function. Higher levels of phosphorylation seen in the brain from patients with Huntington disease. Post-translationally, polyubiquitinated by RCHY1/PIRH2; leading to its degradation by the proteasome. As to expression, expressed in striatal neurons of patients with Huntington disease (at protein level). Brain, kidney, placenta, colon, heart, liver, spleen, skeletal muscle, prostate, thymus and pancreas. Highly expressed in fetal tissue. Expressed in the respiratory epithelium.

It is found in the nucleus. The protein localises to the cytoplasm. In terms of biological role, participates in the apoptotic response to DNA damage. Isoforms containing the transactivation domain are pro-apoptotic, isoforms lacking the domain are anti-apoptotic and block the function of p53 and transactivating p73 isoforms. May be a tumor suppressor protein. Is an activator of FOXJ1 expression. It is an essential factor for the positive regulation of lung ciliated cell differentiation. The chain is Tumor protein p73 (TP73) from Homo sapiens (Human).